The chain runs to 207 residues: FMN-dependent NADH:quinone oxidoreductase (207 aa).

Residue Ser-10 participates in FMN binding.

It belongs to the azoreductase type 1 family. Homodimer. It depends on FMN as a cofactor.

The enzyme catalyses 2 a quinone + NADH + H(+) = 2 a 1,4-benzosemiquinone + NAD(+). The catalysed reaction is N,N-dimethyl-1,4-phenylenediamine + anthranilate + 2 NAD(+) = 2-(4-dimethylaminophenyl)diazenylbenzoate + 2 NADH + 2 H(+). In terms of biological role, quinone reductase that provides resistance to thiol-specific stress caused by electrophilic quinones. Its function is as follows. Also exhibits azoreductase activity. Catalyzes the reductive cleavage of the azo bond in aromatic azo compounds to the corresponding amines. This Shouchella clausii (strain KSM-K16) (Alkalihalobacillus clausii) protein is FMN-dependent NADH:quinone oxidoreductase.